The chain runs to 200 residues: NAD(P)H dehydrogenase (quinone) (200 aa).

Residues 4–191 enclose the Flavodoxin-like domain; it reads VLVLYYSSYG…DIARYQGKHV (188 aa). FMN is bound by residues 10–15 and 79–81; these read SSYGHV and TRF. Tyr12 lines the NAD(+) pocket. Trp99 contributes to the substrate binding site. Residues 114-120 and His135 each bind FMN; that span reads STGTQHG.

This sequence belongs to the WrbA family. It depends on FMN as a cofactor.

The catalysed reaction is a quinone + NADH + H(+) = a quinol + NAD(+). It carries out the reaction a quinone + NADPH + H(+) = a quinol + NADP(+). The chain is NAD(P)H dehydrogenase (quinone) from Burkholderia cenocepacia (strain ATCC BAA-245 / DSM 16553 / LMG 16656 / NCTC 13227 / J2315 / CF5610) (Burkholderia cepacia (strain J2315)).